The chain runs to 802 residues: DSC E3 ubiquitin ligase complex subunit A (802 aa).

The first 22 residues, 1–22 (MDNRGSFFFLLIVFYLLLSSQS), serve as a signal peptide directing secretion. The Lumenal portion of the chain corresponds to 23–381 (RPPLLDQDRE…TGPKIEEYDK (359 aa)). 6 N-linked (GlcNAc...) asparagine glycosylation sites follow: Asn-48, Asn-71, Asn-115, Asn-126, Asn-148, and Asn-166. The helical transmembrane segment at 382–402 (YSARLVFIICGVFAAQITLLL) threads the bilayer. Residues 403 to 429 (RQIKEASTPSTRSRISFYTIALMAFGD) are Cytoplasmic-facing. The helical transmembrane segment at 430-450 (AFVLIFILLELYPAVSFLVMA) threads the bilayer. Residues 451 to 453 (TAA) lie on the Lumenal side of the membrane. A helical transmembrane segment spans residues 454 to 474 (FLTFLSVSYIGMKFMMEIWAV). Residues 475–550 (QAPERREQER…QETRNDVGAM (76 aa)) are Cytoplasmic-facing. Residues 478–541 (ERREQERRSN…TNRGTTSAAQ (64 aa)) are disordered. The segment covering 532 to 541 (TNRGTTSAAQ) has biased composition (polar residues). A helical membrane pass occupies residues 551–571 (YARFYFVLFVMLIISIWSFLW). At 572 to 574 (PNR) the chain is on the lumenal side. A helical transmembrane segment spans residues 575-595 (LGALYARALAFVYLSFWTPQI). Over 596–608 (GRNIIRNCRKALR) the chain is Cytoplasmic. A helical transmembrane segment spans residues 609-629 (WDFVIGQSILRLFPFVYFLTV). The Lumenal portion of the chain corresponds to 630 to 642 (RGNVLFIHPDTTT). Residues 643 to 663 (AFALAGWVWIQVWVLASQDIL) traverse the membrane as a helical segment. Topologically, residues 664–802 (GPRFFVPRGW…PICRESIPPV (139 aa)) are cytoplasmic. An RING-type; atypical zinc finger spans residues 732-796 (CAICMQEIEV…RLRLQCPICR (65 aa)).

Component of the DSC E3 ubiquitin ligase complex composed of dscA, dscB, dscC and dscD.

The protein localises to the endoplasmic reticulum membrane. It carries out the reaction S-ubiquitinyl-[E2 ubiquitin-conjugating enzyme]-L-cysteine + [acceptor protein]-L-lysine = [E2 ubiquitin-conjugating enzyme]-L-cysteine + N(6)-ubiquitinyl-[acceptor protein]-L-lysine.. Its pathway is protein modification; protein ubiquitination. In terms of biological role, catalytic component of the DSC E3 ubiquitin ligase complex which is required for the srbA transcriptional activator proteolytic cleavage to release the soluble transcription factor from the membrane in low oxygen or sterol conditions. Required for growth during hypoxia and triazole drug susceptibility, as well as for virulence in a murine model of invasive pulmonary aspergillosis (IPA). The polypeptide is DSC E3 ubiquitin ligase complex subunit A (Aspergillus fumigatus (strain CBS 144.89 / FGSC A1163 / CEA10) (Neosartorya fumigata)).